Reading from the N-terminus, the 237-residue chain is Protein GrpE (237 aa).

Disordered regions lie at residues 24–56 (LILE…KQLQ) and 204–237 (SAGS…PQPS).

The protein belongs to the GrpE family. Homodimer.

It localises to the cytoplasm. Its function is as follows. Participates actively in the response to hyperosmotic and heat shock by preventing the aggregation of stress-denatured proteins, in association with DnaK and GrpE. It is the nucleotide exchange factor for DnaK and may function as a thermosensor. Unfolded proteins bind initially to DnaJ; upon interaction with the DnaJ-bound protein, DnaK hydrolyzes its bound ATP, resulting in the formation of a stable complex. GrpE releases ADP from DnaK; ATP binding to DnaK triggers the release of the substrate protein, thus completing the reaction cycle. Several rounds of ATP-dependent interactions between DnaJ, DnaK and GrpE are required for fully efficient folding. The sequence is that of Protein GrpE from Synechococcus sp. (strain JA-2-3B'a(2-13)) (Cyanobacteria bacterium Yellowstone B-Prime).